We begin with the raw amino-acid sequence, 507 residues long: ATP synthase subunit alpha, plastid (507 aa).

Residue 170-177 (GDRQTGKT) coordinates ATP.

The protein belongs to the ATPase alpha/beta chains family. In terms of assembly, F-type ATPases have 2 components, CF(1) - the catalytic core - and CF(0) - the membrane proton channel. CF(1) has five subunits: alpha(3), beta(3), gamma(1), delta(1), epsilon(1). CF(0) has four main subunits: a, b, b' and c.

It localises to the plastid membrane. It carries out the reaction ATP + H2O + 4 H(+)(in) = ADP + phosphate + 5 H(+)(out). In terms of biological role, produces ATP from ADP in the presence of a proton gradient across the membrane. The alpha chain is a regulatory subunit. The sequence is that of ATP synthase subunit alpha, plastid from Cuscuta gronovii (Common dodder).